We begin with the raw amino-acid sequence, 1220 residues long: DNA-directed RNA polymerase subunit beta (1220 aa).

This sequence belongs to the RNA polymerase beta chain family. The RNAP catalytic core consists of 2 alpha, 1 beta, 1 beta' and 1 omega subunit. When a sigma factor is associated with the core the holoenzyme is formed, which can initiate transcription.

It carries out the reaction RNA(n) + a ribonucleoside 5'-triphosphate = RNA(n+1) + diphosphate. Its function is as follows. DNA-dependent RNA polymerase catalyzes the transcription of DNA into RNA using the four ribonucleoside triphosphates as substrates. The chain is DNA-directed RNA polymerase subunit beta from Mesomycoplasma hyopneumoniae (strain 232) (Mycoplasma hyopneumoniae).